Consider the following 464-residue polypeptide: ATP synthase subunit beta (464 aa).

ATP is bound at residue 151–158 (GGAGVGKT).

This sequence belongs to the ATPase alpha/beta chains family. In terms of assembly, F-type ATPases have 2 components, CF(1) - the catalytic core - and CF(0) - the membrane proton channel. CF(1) has five subunits: alpha(3), beta(3), gamma(1), delta(1), epsilon(1). CF(0) has three main subunits: a(1), b(2) and c(9-12). The alpha and beta chains form an alternating ring which encloses part of the gamma chain. CF(1) is attached to CF(0) by a central stalk formed by the gamma and epsilon chains, while a peripheral stalk is formed by the delta and b chains.

The protein localises to the cell membrane. It carries out the reaction ATP + H2O + 4 H(+)(in) = ADP + phosphate + 5 H(+)(out). Produces ATP from ADP in the presence of a proton gradient across the membrane. The catalytic sites are hosted primarily by the beta subunits. The polypeptide is ATP synthase subunit beta (Bacillus cytotoxicus (strain DSM 22905 / CIP 110041 / 391-98 / NVH 391-98)).